The sequence spans 154 residues: Myoglobin (154 aa).

The Globin domain maps to 2–148; sequence GLSEAEWQLV…FRKDIAAKYK (147 aa). At S4 the chain carries Phosphoserine. Residue H65 participates in nitrite binding. H65 contacts O2. Residue T68 is modified to Phosphothreonine. Heme b is bound at residue H94.

This sequence belongs to the globin family. In terms of assembly, monomeric.

The protein localises to the cytoplasm. Its subcellular location is the sarcoplasm. It carries out the reaction Fe(III)-heme b-[protein] + nitric oxide + H2O = Fe(II)-heme b-[protein] + nitrite + 2 H(+). The catalysed reaction is H2O2 + AH2 = A + 2 H2O. Functionally, monomeric heme protein which primary function is to store oxygen and facilitate its diffusion within muscle tissues. Reversibly binds oxygen through a pentacoordinated heme iron and enables its timely and efficient release as needed during periods of heightened demand. Depending on the oxidative conditions of tissues and cells, and in addition to its ability to bind oxygen, it also has a nitrite reductase activity whereby it regulates the production of bioactive nitric oxide. Under stress conditions, like hypoxia and anoxia, it also protects cells against reactive oxygen species thanks to its pseudoperoxidase activity. The sequence is that of Myoglobin (MB) from Mesoplodon carlhubbsi (Hubb's beaked whale).